Reading from the N-terminus, the 228-residue chain is 2,3-bisphosphoglycerate-dependent phosphoglycerate mutase (228 aa).

Residues arginine 8 to asparagine 15, threonine 21 to glycine 22, arginine 60, glutamate 87 to tyrosine 90, lysine 98, arginine 114 to arginine 115, and glycine 183 to asparagine 184 each bind substrate. Histidine 9 functions as the Tele-phosphohistidine intermediate in the catalytic mechanism. Glutamate 87 acts as the Proton donor/acceptor in catalysis.

This sequence belongs to the phosphoglycerate mutase family. BPG-dependent PGAM subfamily.

It carries out the reaction (2R)-2-phosphoglycerate = (2R)-3-phosphoglycerate. It functions in the pathway carbohydrate degradation; glycolysis; pyruvate from D-glyceraldehyde 3-phosphate: step 3/5. In terms of biological role, catalyzes the interconversion of 2-phosphoglycerate and 3-phosphoglycerate. This chain is 2,3-bisphosphoglycerate-dependent phosphoglycerate mutase, found in Staphylococcus aureus (strain MRSA252).